The following is a 515-amino-acid chain: Meiotically up-regulated gene 68 protein (515 aa).

Residues 165 to 204 (LHSIESERNESSLSLDSGESEKKSEEDNGNGEQNYIPEQY) form a disordered region.

Functionally, has a role in meiosis. The chain is Meiotically up-regulated gene 68 protein (mug68) from Schizosaccharomyces pombe (strain 972 / ATCC 24843) (Fission yeast).